A 180-amino-acid chain; its full sequence is NADH-quinone oxidoreductase subunit I (180 aa).

4Fe-4S ferredoxin-type domains follow at residues 50–80 (LTRD…LQKA) and 90–119 (EFFR…LTPD). Residues C60, C63, C66, C70, C99, C102, C105, and C109 each contribute to the [4Fe-4S] cluster site.

Belongs to the complex I 23 kDa subunit family. As to quaternary structure, NDH-1 is composed of 13 different subunits. Subunits NuoA, H, J, K, L, M, N constitute the membrane sector of the complex. It depends on [4Fe-4S] cluster as a cofactor.

It is found in the cell inner membrane. The catalysed reaction is a quinone + NADH + 5 H(+)(in) = a quinol + NAD(+) + 4 H(+)(out). In terms of biological role, NDH-1 shuttles electrons from NADH, via FMN and iron-sulfur (Fe-S) centers, to quinones in the respiratory chain. The immediate electron acceptor for the enzyme in this species is believed to be ubiquinone. Couples the redox reaction to proton translocation (for every two electrons transferred, four hydrogen ions are translocated across the cytoplasmic membrane), and thus conserves the redox energy in a proton gradient. This is NADH-quinone oxidoreductase subunit I from Salmonella choleraesuis (strain SC-B67).